A 293-amino-acid chain; its full sequence is 4-hydroxybenzoate octaprenyltransferase (293 aa).

8 helical membrane-spanning segments follow: residues 26–46, 49–69, 102–122, 148–168, 173–193, 217–237, 240–260, and 272–292; these read IGTLLLLWPCLMALLFAAKGM, IKVLLIFILGVVIMRACGCII, LFALLGLLAFALVLLLNPLVV, FLGIVWSWSIPMAYAAQLGEV, WWLFAANWCWTVAYDTMYAMI, WIAVFQLMAFGCFLMAGLSAE, FIYALGLLGFIAFSVYQQRLI, and FLNNNWVGMLLFLTLAADYLL.

It belongs to the UbiA prenyltransferase family. The cofactor is Mg(2+).

Its subcellular location is the cell inner membrane. It carries out the reaction all-trans-octaprenyl diphosphate + 4-hydroxybenzoate = 4-hydroxy-3-(all-trans-octaprenyl)benzoate + diphosphate. It functions in the pathway cofactor biosynthesis; ubiquinone biosynthesis. Functionally, catalyzes the prenylation of para-hydroxybenzoate (PHB) with an all-trans polyprenyl group. Mediates the second step in the final reaction sequence of ubiquinone-8 (UQ-8) biosynthesis, which is the condensation of the polyisoprenoid side chain with PHB, generating the first membrane-bound Q intermediate 3-octaprenyl-4-hydroxybenzoate. The polypeptide is 4-hydroxybenzoate octaprenyltransferase (Shewanella denitrificans (strain OS217 / ATCC BAA-1090 / DSM 15013)).